The primary structure comprises 77 residues: Acyl carrier protein (77 aa).

The region spanning 1 to 76 (MAVFDDVRDV…DVVNYIEKLG (76 aa)) is the Carrier domain. Ser36 bears the O-(pantetheine 4'-phosphoryl)serine mark.

The protein belongs to the acyl carrier protein (ACP) family. In terms of processing, 4'-phosphopantetheine is transferred from CoA to a specific serine of apo-ACP by AcpS. This modification is essential for activity because fatty acids are bound in thioester linkage to the sulfhydryl of the prosthetic group.

It is found in the cytoplasm. It participates in lipid metabolism; fatty acid biosynthesis. Carrier of the growing fatty acid chain in fatty acid biosynthesis. This is Acyl carrier protein from Campylobacter curvus (strain 525.92).